The chain runs to 1396 residues: MKDLLNLLKNQNYAHEFDSIRISLASPDMIRSWSFGEVKKPETINYRTFKPERDGLFCAKIFGPIKDYECLCGKYKRLKHRGVICEKCGVEVAPANVRRERMGHIELASPVAHIWFLKSLPSRIGLLLDMTLRDIERVLYFESFIVIDPGMTTLEKGQLLSDEQYYEALEEFGDEFDARMGAEAIQGLLADLELEDEIERLREEIPNTNSETKIKKLSKRLKLMEAFAESGNHPEWMILTVLPVLPPDLRPLVPLDGGRFATSDLNDLYRRVINRNNRLKRLLELNAPDIIVRNEKRMLQESVDALLDNGRRGRAITGSNKRPLKSLADMIKGKQGRFRQNLLGKRVDYSGRSVIVVGPTLRLHQCGLPKKMALELFKPFIFSKLEHRGLATTIKAAKKMVEREEAVVWDILDEVIREHPVMLNRAPTLHRLGIQAFEPVLIEGKAIQLHPLVCTAYNADFDGDQMAVHVPLTLEAQLEARALMMSTNNILSPANGDPIIVPSQDVVLGLYFMTRERINAKGEGMVFSDIKEVQRAYGAKKVDLQAKVKVRIRDVVIDEDRNKTVTVSVLDTTVGRALLFDIFPEGLAFSLVNQNMTKKAISRLINACYRRVGLKETVIFADQIMYTGFYYATLSGASIGVNDFVIPDEKAKIIDAAENEVKEIESQFASGLLTQGEKYNKVIDIWSRANDKVSKAMMDRLGKEKVVNKDGKEVDQDSFNSVYIMADSGARGSAAQIRQLAGMRGLMAKPDGSIIETPITANFREGLNVLQYFISTHGARKGLADTALKTANSGYLTRRLVDVAQDLVVTDLDCGTSEGLLVTPHIEGGDVVVPLGDRVLGRVTASDVYSASDNQNVVVPAGTLLDETTVETLEKAGVDEILVRSPITCETKYGVCASCYGRDLARGHLVNVGEAIGVIAAQSIGEPGTQLTMRTFHIGGAASRASAVDNIQVKHGGTVRLHNLKHIERKNGNLVVVSRSSALAIADEAGREREWYKLPYGVELSVKQGQQVAAGEIVAKWDPHTHPIITEVGGKAIFVGVEEGITVKTQTDEITGLSNIEVMDPKDRPASGKDIRPMLQLLDANGKEMKFPGTDTPVQYFLPPNSLFSLKNGDTIEVGDVIARIPQESSKTRDITGGLPRVADLFEARKPKEPSILAEISGIVSFGKETKGKKRLVITPTDNTDPFEILIPKWRQLNVFEGESVEKGEVISDGPSNPHDILRLLGVGELAKYIINEIQDVYRLQGVVINDKHIEVIVRQMIRKVDVLSSGDTTLIKGDQVELVKLLEENEKAGEEAKMPARYERVLLGITKASLATESFISAASFQETTRVLTEAAVTGKQDHLRGLKENVVVGRLIPAGTGSAYHQERRRKRMQKEGGVSAADVVQALSAELNK.

Positions 70, 72, 85, and 88 each coordinate Zn(2+). Asp-460, Asp-462, and Asp-464 together coordinate Mg(2+). Residues Cys-814, Cys-889, Cys-896, and Cys-899 each contribute to the Zn(2+) site.

Belongs to the RNA polymerase beta' chain family. In terms of assembly, the RNAP catalytic core consists of 2 alpha, 1 beta, 1 beta' and 1 omega subunit. When a sigma factor is associated with the core the holoenzyme is formed, which can initiate transcription. Mg(2+) is required as a cofactor. Requires Zn(2+) as cofactor.

It catalyses the reaction RNA(n) + a ribonucleoside 5'-triphosphate = RNA(n+1) + diphosphate. In terms of biological role, DNA-dependent RNA polymerase catalyzes the transcription of DNA into RNA using the four ribonucleoside triphosphates as substrates. This is DNA-directed RNA polymerase subunit beta' from Hahella chejuensis (strain KCTC 2396).